The chain runs to 316 residues: Neuroguidin (316 aa).

Disordered stretches follow at residues 143–172 (SEAD…VKKY) and 280–316 (SALT…RKRH). Over residues 145–157 (ADEGESDSGEDCA) the composition is skewed to acidic residues. Residues 297–316 (KKSRKGPKKSKKRKGFRKRH) show a composition bias toward basic residues.

This sequence belongs to the SAS10 family. As to quaternary structure, part of the small subunit (SSU) processome, composed of more than 70 proteins and the RNA chaperone small nucleolar RNA (snoRNA) U3.

It is found in the nucleus. The protein resides in the nucleolus. It localises to the chromosome. The protein localises to the centromere. Its subcellular location is the cytoplasm. It is found in the cell projection. The protein resides in the axon. It localises to the dendrite. The protein localises to the filopodium. In terms of biological role, part of the small subunit (SSU) processome, first precursor of the small eukaryotic ribosomal subunit. During the assembly of the SSU processome in the nucleolus, many ribosome biogenesis factors, an RNA chaperone and ribosomal proteins associate with the nascent pre-rRNA and work in concert to generate RNA folding, modifications, rearrangements and cleavage as well as targeted degradation of pre-ribosomal RNA by the RNA exosome. Its dissociation from the complex determines the transition from state pre-A1 to state pre-A1*. May inhibit mRNA translation. The protein is Neuroguidin (ngdn) of Xenopus tropicalis (Western clawed frog).